Consider the following 380-residue polypeptide: Probable protein phosphatase 2C 34 (380 aa).

In terms of domain architecture, PPM-type phosphatase spans 32 to 335 (AAGEFSMAAA…DDISVIVVYL (304 aa)). Asp66, Gly67, Asp267, and Asp326 together coordinate Mn(2+).

Belongs to the PP2C family. Mg(2+) is required as a cofactor. Requires Mn(2+) as cofactor.

The catalysed reaction is O-phospho-L-seryl-[protein] + H2O = L-seryl-[protein] + phosphate. It carries out the reaction O-phospho-L-threonyl-[protein] + H2O = L-threonyl-[protein] + phosphate. The sequence is that of Probable protein phosphatase 2C 34 (BIPP2C2) from Oryza sativa subsp. indica (Rice).